A 348-amino-acid chain; its full sequence is Flavonol synthase/flavanone 3-hydroxylase (348 aa).

One can recognise a Fe2OG dioxygenase domain in the interval 209 to 309; the sequence is EIVYLLKINY…RMSWPVFLEP (101 aa). Positions 234, 236, and 290 each coordinate Fe cation.

Belongs to the iron/ascorbate-dependent oxidoreductase family. L-ascorbate serves as cofactor. It depends on Fe cation as a cofactor.

It is found in the cytoplasm. The catalysed reaction is a (2R,3R)-dihydroflavonol + 2-oxoglutarate + O2 = a flavonol + succinate + CO2 + H2O. It carries out the reaction a (2S)-flavan-4-one + 2-oxoglutarate + O2 = a (2R,3R)-dihydroflavonol + succinate + CO2. It participates in secondary metabolite biosynthesis; flavonoid biosynthesis. Its function is as follows. Catalyzes the formation of flavonols from dihydroflavonols. It can act on dihydrokaempferol to produce kaempferol, on dihydroquercetin to produce quercitin and on dihydromyricetin to produce myricetin. In Petunia hybrida (Petunia), this protein is Flavonol synthase/flavanone 3-hydroxylase (FL).